A 161-amino-acid chain; its full sequence is Putative pre-16S rRNA nuclease (161 aa).

Residues 142 to 161 form a disordered region; that stretch reads AGSPPGALVPRNRVDPDRHA.

Belongs to the YqgF nuclease family.

The protein localises to the cytoplasm. Functionally, could be a nuclease involved in processing of the 5'-end of pre-16S rRNA. The sequence is that of Putative pre-16S rRNA nuclease from Clavibacter sepedonicus (Clavibacter michiganensis subsp. sepedonicus).